The following is a 649-amino-acid chain: Mediator of RNA polymerase II transcription subunit 17 (649 aa).

Residues 51–79 (QGSGSEEEEAAGPDGDAPDWGGAGADQDD) form a disordered region.

The protein belongs to the Mediator complex subunit 17 family. Component of the Mediator complex, which is composed of MED1, MED4, MED6, MED7, MED8, MED9, MED10, MED11, MED12, MED13, MED13L, MED14, MED15, MED16, MED17, MED18, MED19, MED20, MED21, MED22, MED23, MED24, MED25, MED26, MED27, MED29, MED30, MED31, CCNC, CDK8 and CDC2L6/CDK11. The MED12, MED13, CCNC and CDK8 subunits form a distinct module termed the CDK8 module. Mediator containing the CDK8 module is less active than Mediator lacking this module in supporting transcriptional activation. Individual preparations of the Mediator complex lacking one or more distinct subunits have been variously termed ARC, CRSP, DRIP, PC2, SMCC and TRAP. Interacts with STAT2. Interacts with GATA1 and PPARG.

The protein resides in the nucleus. In terms of biological role, component of the Mediator complex, a coactivator involved in the regulated transcription of nearly all RNA polymerase II-dependent genes. Mediator functions as a bridge to convey information from gene-specific regulatory proteins to the basal RNA polymerase II transcription machinery. Mediator is recruited to promoters by direct interactions with regulatory proteins and serves as a scaffold for the assembly of a functional preinitiation complex with RNA polymerase II and the general transcription factors. This Mus musculus (Mouse) protein is Mediator of RNA polymerase II transcription subunit 17 (Med17).